A 545-amino-acid polypeptide reads, in one-letter code: Membrane protein insertase YidC (545 aa).

4 consecutive transmembrane segments (helical) span residues 350–370 (IIGNWGWAIVVLTIIVKAVLY), 424–444 (LPMLLQIPVFIGLYWALFASV), 461–481 (ADPYYILPIIMAATMFAQTYL), and 498–518 (PLVFSVMFFFFPAGLVLYWVV).

Belongs to the OXA1/ALB3/YidC family. Type 1 subfamily. Interacts with the Sec translocase complex via SecD. Specifically interacts with transmembrane segments of nascent integral membrane proteins during membrane integration.

It is found in the cell inner membrane. Its function is as follows. Required for the insertion and/or proper folding and/or complex formation of integral membrane proteins into the membrane. Involved in integration of membrane proteins that insert both dependently and independently of the Sec translocase complex, as well as at least some lipoproteins. Aids folding of multispanning membrane proteins. The sequence is that of Membrane protein insertase YidC from Neisseria gonorrhoeae (strain NCCP11945).